Here is a 266-residue protein sequence, read N- to C-terminus: Beta-lactamase OXA-11 (266 aa).

Positions 1–20 are cleaved as a signal peptide; it reads MKTFAAYVIIACLSSTALAG. The Acyl-ester intermediate role is filled by S67. An N6-carboxylysine modification is found at K70. Residue 205-207 coordinates substrate; the sequence is KTG.

This sequence belongs to the class-D beta-lactamase family.

The catalysed reaction is a beta-lactam + H2O = a substituted beta-amino acid. Hydrolyzes carbenicillin, oxacillin and cephalosporin. Does not hydrolyze cefoxitin or carbapenems. The sequence is that of Beta-lactamase OXA-11 (bla) from Pseudomonas aeruginosa.